A 391-amino-acid polypeptide reads, in one-letter code: Pyruvate dehydrogenase E1 component subunit alpha, mitochondrial (391 aa).

A mitochondrion-targeting transit peptide spans 1 to 26 (MALSTSRAINHIMKPLSAAVCATRRL). Pyruvate contacts are provided by His-92, Tyr-118, Arg-119, Gly-167, Val-169, Asp-198, Gly-199, Ala-200, Asn-227, and Tyr-229. Residues Tyr-118, Arg-119, Gly-167, Val-169, Asp-198, Gly-199, Ala-200, and Asn-227 each contribute to the thiamine diphosphate site. Position 198 (Asp-198) interacts with Mg(2+). Residues Asn-227 and Tyr-229 each coordinate Mg(2+). His-293 serves as a coordination point for thiamine diphosphate. The disordered stretch occupies residues 294 to 313 (SMSDPGSTYRTRDEISGVRQ). Basic and acidic residues predominate over residues 303-313 (RTRDEISGVRQ).

In terms of assembly, tetramer of 2 alpha and 2 beta subunits. It depends on thiamine diphosphate as a cofactor. Mg(2+) serves as cofactor.

The protein resides in the mitochondrion matrix. The enzyme catalyses N(6)-[(R)-lipoyl]-L-lysyl-[protein] + pyruvate + H(+) = N(6)-[(R)-S(8)-acetyldihydrolipoyl]-L-lysyl-[protein] + CO2. With respect to regulation, E1 activity is regulated by phosphorylation (inactivation) and dephosphorylation (activation) of the alpha subunit. Its function is as follows. The pyruvate dehydrogenase complex catalyzes the overall conversion of pyruvate to acetyl-CoA and CO(2). It contains multiple copies of three enzymatic components: pyruvate dehydrogenase (E1), dihydrolipoamide acetyltransferase (E2) and lipoamide dehydrogenase (E3). This chain is Pyruvate dehydrogenase E1 component subunit alpha, mitochondrial, found in Solanum tuberosum (Potato).